We begin with the raw amino-acid sequence, 198 residues long: GTP-binding protein RHO1 (198 aa).

16–23 (GDGACGKT) provides a ligand contact to GTP. The Effector region signature appears at 38–46 (YVPTVFENY). GTP-binding positions include 63 to 67 (DTAGQ) and 121 to 124 (CKSD). At cysteine 195 the chain carries Cysteine methyl ester. The S-geranylgeranyl cysteine moiety is linked to residue cysteine 195. Positions 196 to 198 (VVL) are cleaved as a propeptide — removed in mature form.

The protein belongs to the small GTPase superfamily. Rho family.

The protein localises to the cell membrane. This chain is GTP-binding protein RHO1 (RHO1), found in Candida albicans (strain SC5314 / ATCC MYA-2876) (Yeast).